A 260-amino-acid polypeptide reads, in one-letter code: Phosphonates import ATP-binding protein PhnC 2 (260 aa).

Residues 4 to 245 form the ABC transporter domain; it reads IQINKATKTY…KNTLRTIYQR (242 aa). 37–44 is an ATP binding site; it reads GPSGAGKS.

The protein belongs to the ABC transporter superfamily. Phosphonates importer (TC 3.A.1.9.1) family. As to quaternary structure, the complex is composed of two ATP-binding proteins (PhnC), two transmembrane proteins (PhnE) and a solute-binding protein (PhnD).

It is found in the cell inner membrane. The catalysed reaction is phosphonate(out) + ATP + H2O = phosphonate(in) + ADP + phosphate + H(+). Functionally, part of the ABC transporter complex PhnCDE involved in phosphonates import. Responsible for energy coupling to the transport system. In Trichodesmium erythraeum (strain IMS101), this protein is Phosphonates import ATP-binding protein PhnC 2.